We begin with the raw amino-acid sequence, 256 residues long: Calsenilin (256 aa).

The disordered stretch occupies residues 1–22; that stretch reads MQRTKEAMKASDGSLLGDPGRI. A Phosphoserine modification is found at serine 14. Lysine 26 is covalently cross-linked (Glycyl lysine isopeptide (Lys-Gly) (interchain with G-Cter in SUMO1)). S-palmitoyl cysteine attachment occurs at residues cysteine 45 and cysteine 46. Serine 60 and serine 63 each carry phosphoserine. The EF-hand 1; degenerate domain maps to 67-123; that stretch reads LELSTVRHQPEGLDQLQAQTKFTKKELQSLYRGFKNECPTGLVDEDTFKLIYSQFFP. Lysine 90 participates in a covalent cross-link: Glycyl lysine isopeptide (Lys-Gly) (interchain with G-Cter in SUMO1). 3 EF-hand domains span residues 126-161, 162-197, and 210-245; these read DATT…LLRG, TVHE…IYDM, and APLE…DENI. Aspartate 175, asparagine 177, aspartate 179, tyrosine 181, glutamate 186, aspartate 223, asparagine 225, aspartate 227, and glutamate 234 together coordinate Ca(2+). An interaction with KCND2 region spans residues 243-256; that stretch reads ENIMSSMQLFENVI.

It belongs to the recoverin family. Binds to DNA as a homomultimer. Dimerization is induced by binding to calcium. Interacts with the C-terminus of PSEN1 and PSEN2 and with PSEN2 CTF subunit. Associates with KCN1. Component of heteromultimeric potassium channels. Identified in potassium channel complexes containing KCND1, KCND2, KCND3, KCNIP1, KCNIP2, KCNIP3, KCNIP4, DPP6 and DPP10. Interacts with KCND2 and KCND3. Post-translationally, palmitoylated. Palmitoylation enhances association with the plasma membrane. In terms of processing, proteolytically cleaved by caspase-3. As to expression, detected in brain cortex, thalamus, dentate gyrus and cerebellum (at protein level). Expressed in brain. Colocalizes with KCND2 in excitatory neurons including cortical and hippocampal CA1 pyramidal cells.

It is found in the cytoplasm. It localises to the cell membrane. The protein localises to the endoplasmic reticulum. The protein resides in the golgi apparatus. Its subcellular location is the nucleus. Its function is as follows. Calcium-dependent transcriptional repressor that binds to the DRE element of genes including PDYN and FOS. Affinity for DNA is reduced upon binding to calcium and enhanced by binding to magnesium. Seems to be involved in nociception. In terms of biological role, regulatory subunit of Kv4/D (Shal)-type voltage-gated rapidly inactivating A-type potassium channels, such as KCND2/Kv4.2 and KCND3/Kv4.3. Modulates channel expression at the cell membrane, gating characteristics, inactivation kinetics and rate of recovery from inactivation in a calcium-dependent and isoform-specific manner. Functionally, may play a role in the regulation of PSEN2 proteolytic processing and apoptosis. Together with PSEN2 involved in modulation of amyloid-beta formation. This is Calsenilin (Kcnip3) from Rattus norvegicus (Rat).